A 978-amino-acid polypeptide reads, in one-letter code: Peroxisomal ATPase PEX6 (978 aa).

Arg119 is modified (omega-N-methylarginine). ATP is bound by residues Gly470–Thr477 and Gly742–Thr749.

The protein belongs to the AAA ATPase family. Interacts with PEX1; forming the PEX1-PEX6 AAA ATPase complex, which is composed of a heterohexamer formed by a trimer of PEX1-PEX6 dimers. Interacts with PEX26; interaction is direct and promotes recruitment to peroxisomal membranes. Interacts with ZFAND6.

It localises to the cytoplasm. The protein resides in the cytosol. The protein localises to the peroxisome membrane. Its subcellular location is the cell projection. It is found in the cilium. It localises to the photoreceptor outer segment. The catalysed reaction is ATP + H2O = ADP + phosphate + H(+). Its function is as follows. Component of the PEX1-PEX6 AAA ATPase complex, a protein dislocase complex that mediates the ATP-dependent extraction of the PEX5 receptor from peroxisomal membranes, an essential step for PEX5 recycling. Specifically recognizes PEX5 monoubiquitinated at 'Cys-11', and pulls it out of the peroxisome lumen through the PEX2-PEX10-PEX12 retrotranslocation channel. Extraction by the PEX1-PEX6 AAA ATPase complex is accompanied by unfolding of the TPR repeats and release of bound cargo from PEX5. In Rattus norvegicus (Rat), this protein is Peroxisomal ATPase PEX6.